The primary structure comprises 104 residues: Large ribosomal subunit protein bL21 (104 aa).

This sequence belongs to the bacterial ribosomal protein bL21 family. Part of the 50S ribosomal subunit. Contacts protein L20.

Functionally, this protein binds to 23S rRNA in the presence of protein L20. This Gluconacetobacter diazotrophicus (strain ATCC 49037 / DSM 5601 / CCUG 37298 / CIP 103539 / LMG 7603 / PAl5) protein is Large ribosomal subunit protein bL21.